The chain runs to 231 residues: Sec-independent protein translocase protein TatB (231 aa).

A helical membrane pass occupies residues 1-21 (MFDIGFSELLLFGVIALIVLG). The tract at residues 77–168 (MRREMAEMRG…SLKTDFNDNA (92 aa)) is disordered. Residues 101–111 (ASRDLVDDAKP) are compositionally biased toward basic and acidic residues. Residues 148–157 (SEQPSAQGDN) show a composition bias toward polar residues.

This sequence belongs to the TatB family. The Tat system comprises two distinct complexes: a TatABC complex, containing multiple copies of TatA, TatB and TatC subunits, and a separate TatA complex, containing only TatA subunits. Substrates initially bind to the TatABC complex, which probably triggers association of the separate TatA complex to form the active translocon.

The protein resides in the cell inner membrane. Functionally, part of the twin-arginine translocation (Tat) system that transports large folded proteins containing a characteristic twin-arginine motif in their signal peptide across membranes. Together with TatC, TatB is part of a receptor directly interacting with Tat signal peptides. TatB may form an oligomeric binding site that transiently accommodates folded Tat precursor proteins before their translocation. This is Sec-independent protein translocase protein TatB from Psychrobacter cryohalolentis (strain ATCC BAA-1226 / DSM 17306 / VKM B-2378 / K5).